The following is a 156-amino-acid chain: Small ribosomal subunit protein uS7 (156 aa).

The protein belongs to the universal ribosomal protein uS7 family. In terms of assembly, part of the 30S ribosomal subunit. Contacts proteins S9 and S11.

One of the primary rRNA binding proteins, it binds directly to 16S rRNA where it nucleates assembly of the head domain of the 30S subunit. Is located at the subunit interface close to the decoding center, probably blocks exit of the E-site tRNA. The protein is Small ribosomal subunit protein uS7 of Methylobacterium radiotolerans (strain ATCC 27329 / DSM 1819 / JCM 2831 / NBRC 15690 / NCIMB 10815 / 0-1).